A 1047-amino-acid polypeptide reads, in one-letter code: Probable alpha-mannosidase At5g66150 (1047 aa).

The N-terminal stretch at 1–27 is a signal peptide; the sequence is MEKPGMSLLKGSLCVIVFLLLLSLVES. The Zn(2+) site is built by histidine 56, aspartate 58, and aspartate 178. 3 N-linked (GlcNAc...) asparagine glycosylation sites follow: asparagine 280, asparagine 287, and asparagine 345. Position 419 (histidine 419) interacts with Zn(2+). 2 disulfides stabilise this stretch: cysteine 455–cysteine 465 and cysteine 476–cysteine 484. N-linked (GlcNAc...) asparagine glycans are attached at residues asparagine 480, asparagine 508, asparagine 541, asparagine 605, asparagine 606, asparagine 668, asparagine 780, and asparagine 857. Cysteine 855 and cysteine 860 are disulfide-bonded.

This sequence belongs to the glycosyl hydrolase 38 family. In terms of assembly, homodimer. Requires Zn(2+) as cofactor.

The protein resides in the vacuole. It carries out the reaction Hydrolysis of terminal, non-reducing alpha-D-mannose residues in alpha-D-mannosides.. In terms of biological role, liberates mannose from p-nitrophenyl-alpha-D-mannoside in vitro. The sequence is that of Probable alpha-mannosidase At5g66150 from Arabidopsis thaliana (Mouse-ear cress).